Here is a 957-residue protein sequence, read N- to C-terminus: Glycine dehydrogenase (decarboxylating) (957 aa).

The residue at position 708 (Lys-708) is an N6-(pyridoxal phosphate)lysine.

It belongs to the GcvP family. As to quaternary structure, the glycine cleavage system is composed of four proteins: P, T, L and H. It depends on pyridoxal 5'-phosphate as a cofactor.

The enzyme catalyses N(6)-[(R)-lipoyl]-L-lysyl-[glycine-cleavage complex H protein] + glycine + H(+) = N(6)-[(R)-S(8)-aminomethyldihydrolipoyl]-L-lysyl-[glycine-cleavage complex H protein] + CO2. Its function is as follows. The glycine cleavage system catalyzes the degradation of glycine. The P protein binds the alpha-amino group of glycine through its pyridoxal phosphate cofactor; CO(2) is released and the remaining methylamine moiety is then transferred to the lipoamide cofactor of the H protein. This Escherichia coli O1:K1 / APEC protein is Glycine dehydrogenase (decarboxylating).